A 433-amino-acid chain; its full sequence is MKLFIALVGLLALAKALPAVTHSKVLCYYDSRSYVRESQARMLPLDLDPALSFCTHLLYGYAVIQPDTYKLVSLNENLDIDRTHDNYRAITSLKAKYPGLTVLLSVGGDADTEEPEKYNLLLESQQARTAFINSGVLLAEQYGFDGIDLAWQFPRVKPKKIRSTWGSLWHGIKKTFGTTPVDEKESEHREGFTALVRELKQALIHKPKMQLGVTVLPNVNSTIYHDVPAIINLVDYVNVGAYDYYTPTRNNKEADYTAPIYTPQNRNPLQNADAAVTYWLTSGAPSQKIVLSXRLRSYLETGXDSEIAGVPPIHTDGPGEAGPYVKTEGLLSYPEVCGKLINPNQQKGMRPHLRKVTDPSKRFGTYAFRLPDDNGEGGIWVSYEDPDTAGQKAAYVKSKNLGGVAIVDLSLDDFRGLCTGDKYPILRAAKYRL.

The N-terminal stretch at 1–16 is a signal peptide; sequence MKLFIALVGLLALAKA. A GH18 domain is found at 23–433; sequence SKVLCYYDSR…PILRAAKYRL (411 aa). Cys-27 and Cys-54 form a disulfide bridge. Asn-220 carries N-linked (GlcNAc...) asparagine glycosylation. A disulfide bridge links Cys-337 with Cys-418.

This sequence belongs to the glycosyl hydrolase 18 family. IDGF subfamily.

The protein resides in the secreted. This is Chitinase-like protein EN03 from Bombyx mori (Silk moth).